Consider the following 279-residue polypeptide: MPEKPVLIAGPTASGKSALALRIAAEQGGVIVNADASQGYDCWRVLTARPAPDEERQTPHALYGHLNAKVRYSAGHWLRDVMPYLAGEARPIIVGGTGLYFTALTRGLADIPPTPAEIRAKGDRLERAEMLAALDARTRDRIDNANRARVQRAWEVQMATGRGLAAWQDETGAPALPLSAAQAIVFDVDKEVLNARIEKRFDLMLAAGALEEARRVLPDYDPTLPAHRAIGAPELIAHLKGQISLEAAREAAITATRQYAKRQRTWFRSKMRHWSAYMP.

Position 10-17 (Gly10–Ser17) interacts with ATP. Residue Thr12 to Ser17 participates in substrate binding.

It belongs to the IPP transferase family. As to quaternary structure, monomer. Mg(2+) is required as a cofactor.

The enzyme catalyses adenosine(37) in tRNA + dimethylallyl diphosphate = N(6)-dimethylallyladenosine(37) in tRNA + diphosphate. Its function is as follows. Catalyzes the transfer of a dimethylallyl group onto the adenine at position 37 in tRNAs that read codons beginning with uridine, leading to the formation of N6-(dimethylallyl)adenosine (i(6)A). This Roseobacter denitrificans (strain ATCC 33942 / OCh 114) (Erythrobacter sp. (strain OCh 114)) protein is tRNA dimethylallyltransferase.